The primary structure comprises 2065 residues: WD repeat-containing protein 81 (2065 aa).

One can recognise a BEACH domain in the interval leucine 325–valine 617. 4 disordered regions span residues glutamate 1082–glycine 1111, threonine 1156–arginine 1230, glycine 1271–glutamate 1290, and alanine 1595–isoleucine 1642. Positions lysine 1101–glycine 1111 are enriched in gly residues. Residues threonine 1156 to asparagine 1169 show a composition bias toward polar residues. Positions aspartate 1213–glutamate 1228 are enriched in acidic residues. The span at serine 1624–proline 1637 shows a compositional bias: low complexity. 5 WD repeats span residues glycine 1767–arginine 1806, threonine 1813–cysteine 1853, leucine 1906–glycine 1945, glycine 1948–glutamine 1986, and asparagine 2035–alanine 2065.

It belongs to the WD repeat WDR81 family. As to expression, widely expressed.

It is found in the early endosome membrane. The protein resides in the late endosome membrane. Its subcellular location is the lysosome membrane. The protein localises to the cytoplasmic vesicle. It localises to the autophagosome membrane. It is found in the mitochondrion. The protein resides in the cytoplasm. Its subcellular location is the cytosol. Functions as a negative regulator of the PI3 kinase/PI3K activity associated with endosomal membranes. By modifying the phosphatidylinositol 3-phosphate/PtdInsP3 content of endosomal membranes may regulate endosome fusion, recycling, sorting and early to late endosome transport. May also play a role in aggrephagy, the macroautophagic degradation of ubiquitinated protein aggregates. May also be involved in maintenance of normal mitochondrial structure and organization. The protein is WD repeat-containing protein 81 (wdr81) of Danio rerio (Zebrafish).